The primary structure comprises 311 residues: Cbb3-type cytochrome c oxidase subunit CcoP1 (311 aa).

Helical transmembrane passes span 4-24 and 56-76; these read FWSG…FWLI and RWWF…LVLY. Cytochrome c domains are found at residues 130-209 and 220-302; these read QAVK…RKDL and ADLS…YSLS. Heme c is bound by residues Cys-143, Cys-146, His-147, Met-186, Cys-233, Cys-236, His-237, and Met-279.

This sequence belongs to the CcoP / FixP family. In terms of assembly, component of the cbb3-type cytochrome c oxidase at least composed of CcoN, CcoO, CcoQ and CcoP. It depends on heme c as a cofactor.

It is found in the cell inner membrane. It functions in the pathway energy metabolism; oxidative phosphorylation. C-type cytochrome. Part of the cbb3-type cytochrome c oxidase complex. CcoP subunit is required for transferring electrons from donor cytochrome c via its heme groups to CcoO subunit. From there, electrons are shuttled to the catalytic binuclear center of CcoN subunit where oxygen reduction takes place. The complex also functions as a proton pump. The protein is Cbb3-type cytochrome c oxidase subunit CcoP1 of Stutzerimonas stutzeri (Pseudomonas stutzeri).